Consider the following 405-residue polypeptide: S-adenosylmethionine sensor upstream of mTORC1 (405 aa).

Residues 1 to 34 (MEPGAGGRNTARAQRAGSPNTPPPREQERKLEQE) form a disordered region. Over residues 25–34 (REQERKLEQE) the composition is skewed to basic and acidic residues. S-adenosyl-L-methionine-binding residues include arginine 95, glycine 172, aspartate 190, aspartate 202, phenylalanine 203, and serine 244.

It belongs to the BMT2/SAMTOR family. Interacts with the DEPDC5 subunit of the GATOR1 complex; interaction is disrupted when SAMTOR binds S-adenosyl-L-methionine. Interacts with the KICSTOR complex; interaction is disrupted when SAMTOR binds S-adenosyl-L-methionine.

Functionally, S-adenosyl-L-methionine-binding protein that acts as an inhibitor of mTORC1 signaling via interaction with the GATOR1 and KICSTOR complexes. Acts as a sensor of S-adenosyl-L-methionine to signal methionine sufficiency to mTORC1: in presence of methionine, binds S-adenosyl-L-methionine, leading to disrupt interaction with the GATOR1 and KICSTOR complexes and promote mTORC1 signaling. Upon methionine starvation, S-adenosyl-L-methionine levels are reduced, thereby promoting the association with GATOR1 and KICSTOR, leading to inhibit mTORC1 signaling. Probably also acts as a S-adenosyl-L-methionine-dependent methyltransferase (Potential). This is S-adenosylmethionine sensor upstream of mTORC1 from Homo sapiens (Human).